The primary structure comprises 225 residues: MAFYPLQIAGLVLGFLGMVGTLATTLLPQWRVSAFIGSNIIVFERIWEGLWMNCVRQAKARLQCKFYSSMLALSPALEAARALMCVAVALSLIALIIGICGMKKIQCTGSNERAKAYLLGTSGVLFILTGIFVLIPVCWTANIIIRDFYNPAVHVGQKRELGAALFLGWASVAVLFIAGGLLCGFCCCNRKKQRDGYPAPRPSMPRTDERRRNMTRQSETPTSYV.

Over 1–7 (MAFYPLQ) the chain is Cytoplasmic. The chain crosses the membrane as a helical span at residues 8 to 28 (IAGLVLGFLGMVGTLATTLLP). Residues 29 to 81 (QWRVSAFIGSNIIVFERIWEGLWMNCVRQAKARLQCKFYSSMLALSPALEAAR) are Extracellular-facing. A helical transmembrane segment spans residues 82–102 (ALMCVAVALSLIALIIGICGM). Residues 103-124 (KKIQCTGSNERAKAYLLGTSGV) are Cytoplasmic-facing. A helical transmembrane segment spans residues 125–145 (LFILTGIFVLIPVCWTANIII). Residues 146-164 (RDFYNPAVHVGQKRELGAA) lie on the Extracellular side of the membrane. A helical membrane pass occupies residues 165–185 (LFLGWASVAVLFIAGGLLCGF). Over 186-225 (CCCNRKKQRDGYPAPRPSMPRTDERRRNMTRQSETPTSYV) the chain is Cytoplasmic. The disordered stretch occupies residues 194-225 (RDGYPAPRPSMPRTDERRRNMTRQSETPTSYV). Over residues 215 to 225 (TRQSETPTSYV) the composition is skewed to polar residues.

This sequence belongs to the claudin family. In terms of assembly, does not form homotypic polymeric strands and it is not sufficient to form tight junctions by its own. Interacts with OCLN.

It is found in the cell junction. The protein resides in the tight junction. The protein localises to the cell membrane. It carries out the reaction chloride(in) = chloride(out). It catalyses the reaction hydrogencarbonate(in) = hydrogencarbonate(out). The enzyme catalyses bromide(in) = bromide(out). The catalysed reaction is iodide(out) = iodide(in). It carries out the reaction fluoride(in) = fluoride(out). It catalyses the reaction nitrate(in) = nitrate(out). The enzyme catalyses thiocyanate(in) = thiocyanate(out). Its function is as follows. Channel-forming tight junction protein with selectivity for anions, including chloride and hydrogencarbonate, and for solutes smaller than 9 Angstrom in diameter. In the kidney proximal tubule, may be involved in quantitative reabsorption of filtered anions. Does not affect water permeability. This Sus scrofa (Pig) protein is Claudin-17 (CLDN17).